A 716-amino-acid chain; its full sequence is Pyruvate/proton symporter BtsT (716 aa).

The Cytoplasmic segment spans residues 1 to 5 (MDTKK). A helical membrane pass occupies residues 6–26 (IFKHIPWVILGIIGAFCLAVV). At 27 to 30 (ALRR) the chain is on the periplasmic side. The chain crosses the membrane as a helical span at residues 31-51 (GEHISALWIVVASVSVYLVAY). Topologically, residues 52–88 (RYYSLYIAQKVMKLDPTRATPAVINNDGLNYVPTNRY) are cytoplasmic. Residues 89 to 109 (VLFGHHFAAIAGAGPLVGPVL) form a helical membrane-spanning segment. Residues 110–119 (AAQMGYLPGT) are Periplasmic-facing. The helical transmembrane segment at 120–140 (LWLLAGVVLAGAVQDFMVLFI) threads the bilayer. Over 141 to 163 (SSRRNGASLGEMIKEEMGPVPGT) the chain is Cytoplasmic. A helical transmembrane segment spans residues 164 to 184 (IALFGCFLIMIIILAVLALIV). The Periplasmic segment spans residues 185 to 191 (VKALAES). Residues 192 to 212 (PWGVFTVCSTVPIALFMGIYM) form a helical membrane-spanning segment. Residues 213 to 222 (RFIRPGRVGE) are Cytoplasmic-facing. Residues 223-243 (VSVIGIVLLVASIYFGGVIAH) traverse the membrane as a helical segment. The Periplasmic segment spans residues 244 to 257 (DPYWGPALTFKDTT). A helical membrane pass occupies residues 258-278 (ITFALIGYAFVSALLPVWLIL). Residues 279-282 (APRD) are Cytoplasmic-facing. A helical membrane pass occupies residues 283-303 (YLATFLKIGVIVGLALGIVVL). At 304 to 326 (NPELKMPAMTQYIDGTGPLWKGA) the chain is on the periplasmic side. The helical transmembrane segment at 327–347 (LFPFLFITIACGAVSGFHALI) threads the bilayer. At 348–374 (SSGTTPKLLANETDARFIGYGAMLMES) the chain is on the cytoplasmic side. A helical membrane pass occupies residues 375–395 (FVAIMALVAASIIEPGLYFAM). At 396–484 (NTPPAGLGIT…HVFHKVLPMA (89 aa)) the chain is on the periplasmic side. The helical transmembrane segment at 485 to 505 (DMGFWYHFGILFEALFILTAL) threads the bilayer. The Cytoplasmic segment spans residues 506 to 531 (DAGTRSGRFMLQDLLGNFIPFLKKTD). The helical transmembrane segment at 532-552 (SLVAGIIGTAGCVGLWGYLLY) threads the bilayer. The Periplasmic portion of the chain corresponds to 553-568 (QGVVDPLGGVKSLWPL). The helical transmembrane segment at 569–589 (FGISNQMLAAVALVLGTVVLI) threads the bilayer. The Cytoplasmic segment spans residues 590-596 (KMKRTQY). A helical membrane pass occupies residues 597-617 (IWVTVVPAVWLLICTTWALGL). Residues 618–668 (KLFSTNPQMEGFFYMASQYKEKIANGTDLTAQQIANMNHIVVNNYTNAGLS) lie on the Periplasmic side of the membrane. A helical transmembrane segment spans residues 669-689 (ILFLIVVYSIIFYGFKTWLAV). At 690–716 (RNSDKRTDKETPYVPIPEGGVKISSHH) the chain is on the cytoplasmic side. A disordered region spans residues 696–716 (TDKETPYVPIPEGGVKISSHH).

It belongs to the peptide transporter carbon starvation (CstA) (TC 2.A.114) family. In terms of assembly, interacts with BtsS and YpdA.

It localises to the cell inner membrane. It catalyses the reaction pyruvate(out) + H(+)(out) = pyruvate(in) + H(+)(in). Transport is inhibited by the protonophores 2,4-dinitrophenol (DNP) and carbonyl cyanide m-chlorophenyl hydrazone (CCCP), but not by ionophores such as valinomycin, nonactin and nigericin. Its function is as follows. Transports pyruvate with a high affinity and specificity. The process is driven by the proton motive force. Under nutrient limiting conditions, mediates the uptake of pyruvate, thus enabling it to be used as a carbon source for the growth and survival. Part of a nutrient-sensing regulatory network composed of the two-component regulatory systems BtsS/BtsR and YpdA/YpdB, and their respective target proteins, BtsT and YhjX. The sequence is that of Pyruvate/proton symporter BtsT from Escherichia coli (strain K12).